The primary structure comprises 177 residues: O-acetyl-ADP-ribose deacetylase (177 aa).

Positions 1 to 175 (MNSRIHVIHG…LYQRLLTQQG (175 aa)) constitute a Macro domain. Substrate is bound by residues 11-12 (DI), N25, 33-35 (GVD), and 122-126 (STGVY). Residue D35 is the Proton acceptor of the active site.

Belongs to the MacroD-type family. YmdB subfamily. In terms of assembly, homodimer. Interacts with RNase III.

It carries out the reaction 3''-O-acetyl-ADP-D-ribose + H2O = ADP-D-ribose + acetate + H(+). The enzyme catalyses 2''-O-acetyl-ADP-D-ribose + H2O = ADP-D-ribose + acetate + H(+). In terms of biological role, deacetylates O-acetyl-ADP ribose to yield ADP-ribose and free acetate. Down-regulates ribonuclease 3 (RNase III) activity. Acts by interacting directly with the region of the ribonuclease that is required for dimerization/activation. This Citrobacter rodentium (strain ICC168) (Citrobacter freundii biotype 4280) protein is O-acetyl-ADP-ribose deacetylase.